A 541-amino-acid chain; its full sequence is Carboxypeptidase Y homolog A (541 aa).

Positions 1-17 (MKLLMTGLLASAAVAAA) are cleaved as a signal peptide. The propeptide occupies 18 to 122 (QEQQVLQAEG…KLQSYDLRVK (105 aa)). Intrachain disulfides connect Cys-177–Cys-417, Cys-311–Cys-325, Cys-335–Cys-358, Cys-342–Cys-351, and Cys-380–Cys-387. N-linked (GlcNAc...) asparagine glycosylation is present at Asn-208. Residue Ser-264 is part of the active site. The active site involves Asp-456. An N-linked (GlcNAc...) asparagine glycan is attached at Asn-507. His-518 is an active-site residue.

It belongs to the peptidase S10 family.

It localises to the vacuole. The enzyme catalyses Release of a C-terminal amino acid with broad specificity.. Its function is as follows. Vacuolar carboxypeptidase involved in degradation of small peptides. Digests preferentially peptides containing an aliphatic or hydrophobic residue in P1' position, as well as methionine, leucine or phenylalanine in P1 position of ester substrate. The polypeptide is Carboxypeptidase Y homolog A (CPYA) (Arthroderma otae (strain ATCC MYA-4605 / CBS 113480) (Microsporum canis)).